A 147-amino-acid chain; its full sequence is Hemoglobin subunit gamma-2 (147 aa).

Residues 3-147 form the Globin domain; that stretch reads NFTAEDKAAI…VASALGSRYH (145 aa). Thr-13 is modified (phosphothreonine). Phosphoserine is present on residues Ser-45, Ser-51, and Ser-53. The residue at position 60 (Lys-60) is an N6-acetyllysine. His-64 is a heme b binding site. Lys-83 carries the N6-acetyllysine modification. Heme b is bound at residue His-93. Cys-94 carries the S-nitrosocysteine modification. Ser-140 and Ser-144 each carry phosphoserine.

Belongs to the globin family. As to quaternary structure, heterotetramer of two alpha chains and two gamma chains in fetal hemoglobin (Hb F). As to expression, red blood cells.

Its function is as follows. Gamma chains make up the fetal hemoglobin F, in combination with alpha chains. This is Hemoglobin subunit gamma-2 (HBG2) from Cebus albifrons (White-fronted capuchin).